The following is a 356-amino-acid chain: Cdc42 effector protein 4 (356 aa).

Position 5 is an N6-methyllysine (lysine 5). Serine 18 is modified (phosphoserine). One can recognise a CRIB domain in the interval 27 to 41; it reads ISAPLGDFRHTMHVG. Residues 51 to 102 are disordered; it reads SFLNSKAGEPDGESLDEQPSSSSSKRSLLSRKFRGSKRSQSVTRGEREQRDM. The residue at position 64 (serine 64) is a Phosphoserine. Over residues 78 to 87 the composition is skewed to basic residues; it reads LLSRKFRGSK. 3 positions are modified to phosphoserine: serine 105, serine 109, and serine 118. Disordered regions lie at residues 122–182 and 257–356; these read LNEK…LDEQ and VAAP…EIRV. Over residues 123 to 132 the composition is skewed to basic and acidic residues; that stretch reads NEKEAAEKGT. Residues 133-143 are compositionally biased toward low complexity; that stretch reads SKLPKSLSSSP. Phosphoserine is present on residues serine 138, serine 140, serine 142, serine 174, serine 292, and serine 295. The span at 287-315 shows a compositional bias: low complexity; it reads AAAAPSPGSARSMGSHTTRDSSSLSSCTS. A compositionally biased stretch (basic and acidic residues) spans 318–344; it reads LEERSPAFRGPDRARAAVSRQPDKEFS. Positions 345-356 are enriched in acidic residues; it reads FMDEEEEDEIRV.

It belongs to the BORG/CEP family. As to quaternary structure, interacts with CDC42 and RHOQ, in a GTP-dependent manner. In terms of tissue distribution, not detected in any of the adult tissues tested. May be expressed only in fetal or embryonic tissues.

Its subcellular location is the endomembrane system. It is found in the cytoplasm. The protein localises to the cytoskeleton. Functionally, probably involved in the organization of the actin cytoskeleton. May act downstream of CDC42 to induce actin filament assembly leading to cell shape changes. Induces pseudopodia formation, when overexpressed in fibroblasts. This is Cdc42 effector protein 4 (CDC42EP4) from Homo sapiens (Human).